A 1047-amino-acid chain; its full sequence is FACT complex subunit SPT16 (1047 aa).

Residue alanine 2 is modified to N-acetylalanine. Residue lysine 139 is modified to N6-acetyllysine. Phosphoserine is present on serine 188. N6-acetyllysine is present on residues lysine 196 and lysine 223. Positions 432 to 507 (LKNEDEEEEE…GEQQIQKARK (76 aa)) form a coiled coil. At serine 455 the chain carries Phosphoserine. The interval 492-518 (RLTEQKGEQQIQKARKSNVSYKNPSLM) is disordered. Lysine 497 participates in a covalent cross-link: Glycyl lysine isopeptide (Lys-Gly) (interchain with G-Cter in SUMO2). The segment covering 499-514 (EQQIQKARKSNVSYKN) has biased composition (polar residues). Serine 508 is subject to Phosphoserine. At lysine 513 the chain carries N6-acetyllysine; alternate. Lysine 513 participates in a covalent cross-link: Glycyl lysine isopeptide (Lys-Gly) (interchain with G-Cter in SUMO2); alternate. Lysine 647 participates in a covalent cross-link: Glycyl lysine isopeptide (Lys-Gly) (interchain with G-Cter in SUMO2). Residues serine 650 and serine 658 each carry the phosphoserine modification. Lysine 732 and lysine 786 each carry N6-acetyllysine. Threonine 903 carries the post-translational modification Phosphothreonine. Lysine 904 carries the N6-acetyllysine modification. The interval 918 to 1047 (EQGGWSFLEP…SSAPPKKKRK (130 aa)) is disordered. Positions 927–973 (PEGEGSDAEEGDSESEIEDETFNPSEDDYEEEEEDSDEDYSSEAEES) are enriched in acidic residues. Residues serine 979, serine 982, serine 986, and serine 1015 each carry the phosphoserine modification. The span at 985–1005 (ESGKDWDELEEEARKADRESR) shows a compositional bias: basic and acidic residues. Residues 1024 to 1039 (VHSSGRGSNRGSRHSS) are compositionally biased toward low complexity.

It belongs to the peptidase M24 family. SPT16 subfamily. Interacts with MYOG (via C-terminal region). Component of the FACT complex, a stable heterodimer of SSRP1 and SUPT16H. Also a component of a CK2-SPT16-SSRP1 complex which forms following UV irradiation, composed of SSRP1, SUPT16H, CSNK2A1, CSNK2A2 and CSNK2B. Interacts with NEK9. Binds to histone H2A-H2B. Identified in a centromere complex containing histones H2A, H2B and H4, and at least CENPA, CENPB, CENPC, CENPT, CENPN, HJURP, SUPT16H, SSRP1 and RSF1. Interacts with GTF2E2. In terms of assembly, (Microbial infection) Interacts with Herpes simplex virus 1 (HHV-1) protein ICP22; this interaction relocalizes the FACT complex to viral genomes in infected cells. Post-translationally, ADP-ribosylated. ADP-ribosylation by PARP1 is induced by genotoxic stress and correlates with dissociation of FACT from chromatin. Ubiquitous.

Its subcellular location is the nucleus. The protein resides in the chromosome. In terms of biological role, component of the FACT complex, a general chromatin factor that acts to reorganize nucleosomes. The FACT complex is involved in multiple processes that require DNA as a template such as mRNA elongation, DNA replication and DNA repair. During transcription elongation the FACT complex acts as a histone chaperone that both destabilizes and restores nucleosomal structure. It facilitates the passage of RNA polymerase II and transcription by promoting the dissociation of one histone H2A-H2B dimer from the nucleosome, then subsequently promotes the reestablishment of the nucleosome following the passage of RNA polymerase II. The FACT complex is probably also involved in phosphorylation of 'Ser-392' of p53/TP53 via its association with CK2 (casein kinase II). This Homo sapiens (Human) protein is FACT complex subunit SPT16 (SUPT16H).